A 321-amino-acid chain; its full sequence is 4-hydroxy-2-oxoglutarate aldolase, mitochondrial (321 aa).

A mitochondrion-targeting transit peptide spans 1–23; the sequence is MLGPQIWASMRQGLSRGLSRNVK. Substrate is bound at residue 71–72; that stretch reads ST. Residue K190 is the Schiff-base intermediate with substrate of the active site. The substrate site is built by S192 and G216.

This sequence belongs to the DapA family. In terms of assembly, homotetramer.

It is found in the mitochondrion. It carries out the reaction (4S)-4-hydroxy-2-oxoglutarate = glyoxylate + pyruvate. The enzyme catalyses (4R)-4-hydroxy-2-oxoglutarate = glyoxylate + pyruvate. Its activity is regulated as follows. Inhibited by divalent cations. Its function is as follows. Catalyzes the final step in the metabolic pathway of hydroxyproline. This Mus musculus (Mouse) protein is 4-hydroxy-2-oxoglutarate aldolase, mitochondrial (Hoga1).